The chain runs to 623 residues: Leucine aminopeptidase 2 (623 aa).

A peptide is bound by residues 136-138 (QCQ) and 273-278 (PYGGME). A Zn(2+)-binding site is contributed by histidine 302. Glutamate 303 functions as the Proton acceptor in the catalytic mechanism. Zn(2+) is bound by residues histidine 306 and glutamate 325. Catalysis depends on tyrosine 390, which acts as the Proton donor.

This sequence belongs to the peptidase M1 family. It depends on Zn(2+) as a cofactor.

Its subcellular location is the cytoplasm. The protein localises to the nucleus. It carries out the reaction an epoxide + H2O = an ethanediol. Functionally, aminopeptidase that preferentially cleaves di- and tripeptides. Also has low epoxide hydrolase activity (in vitro). Can hydrolyze the epoxide leukotriene LTA(4) but it forms preferentially 5,6-dihydroxy-7,9,11,14-eicosatetraenoic acid rather than the cytokine leukotriene B(4) as the product compared to the homologous mammalian enzyme (in vitro). This chain is Leucine aminopeptidase 2, found in Phaeosphaeria nodorum (strain SN15 / ATCC MYA-4574 / FGSC 10173) (Glume blotch fungus).